The sequence spans 362 residues: MAPGLDLTPDFHPPTTTTTTTNNAPPQQRTLLLAPPTLATHGEARLATLFTTTYPRATTDLQMLDRLAAGLVTLPATTYDLVLVLTDPDGSRRAEAAALLADRAVWARLVPAVRAGGRVASEEGGGEGTEFLGDQRVGREAVLAGLVAGGVGGFVKPEYAEEEAVPLRFGKKKAAAAAAAAVSSAGPAVGTVKVATATSAGKKEEVGMVPPAVAAAAAAPAGVGFVDFSDDLDLDVEDDEDVIDEETLLTEEDLWRPIQQPPECQPQPGKKRRACKDCTCGLASRMEAEDKARRAKADSDLNTLKLKSEDLNELDFTVQGKTGSCGSCYLGDAFRCSDCPYIGLPAFKPGEEVKIVNNAIQL.

Residues 1 to 28 are disordered; that stretch reads MAPGLDLTPDFHPPTTTTTTTNNAPPQQ. A compositionally biased stretch (low complexity) spans 15–28; that stretch reads TTTTTTTNNAPPQQ. Residues 24 to 165 are N-terminal SAM-like domain; it reads APPQQRTLLL…KPEYAEEEAV (142 aa). The segment at 166–254 is linker; it reads PLRFGKKKAA…EETLLTEEDL (89 aa). [2Fe-2S] cluster is bound by residues cysteine 264, cysteine 275, cysteine 278, and cysteine 280. Residues 264–280 form a fe-S binding site A region; that stretch reads CQPQPGKKRRACKDCTC. Cysteine 325, cysteine 328, cysteine 336, and cysteine 339 together coordinate [4Fe-4S] cluster. Short sequence motifs (cx2C motif) lie at residues 325–328 and 336–339; these read CGSC and CSDC. The fe-S binding site B stretch occupies residues 325-339; that stretch reads CGSCYLGDAFRCSDC.

Belongs to the anamorsin family. As to quaternary structure, monomer. Interacts with TAH18. Interacts with MIA40. It depends on [2Fe-2S] cluster as a cofactor. [4Fe-4S] cluster serves as cofactor.

Its subcellular location is the cytoplasm. The protein localises to the mitochondrion intermembrane space. Its function is as follows. Component of the cytosolic iron-sulfur (Fe-S) protein assembly (CIA) machinery required for the maturation of extramitochondrial Fe-S proteins. Part of an electron transfer chain functioning in an early step of cytosolic Fe-S biogenesis, facilitating the de novo assembly of a [4Fe-4S] cluster on the scaffold complex CFD1-NBP35. Electrons are transferred to DRE2 from NADPH via the FAD- and FMN-containing protein TAH18. TAH18-DRE2 are also required for the assembly of the diferric tyrosyl radical cofactor of ribonucleotide reductase (RNR), probably by providing electrons for reduction during radical cofactor maturation in the catalytic small subunit RNR2. This is Fe-S cluster assembly protein DRE2 from Chaetomium globosum (strain ATCC 6205 / CBS 148.51 / DSM 1962 / NBRC 6347 / NRRL 1970) (Soil fungus).